Reading from the N-terminus, the 327-residue chain is DNA-directed RNA polymerase subunit alpha (327 aa).

The segment at Met1–Ser231 is alpha N-terminal domain (alpha-NTD). Residues Asp247–Lys327 form an alpha C-terminal domain (alpha-CTD) region.

This sequence belongs to the RNA polymerase alpha chain family. Homodimer. The RNAP catalytic core consists of 2 alpha, 1 beta, 1 beta' and 1 omega subunit. When a sigma factor is associated with the core the holoenzyme is formed, which can initiate transcription.

The catalysed reaction is RNA(n) + a ribonucleoside 5'-triphosphate = RNA(n+1) + diphosphate. In terms of biological role, DNA-dependent RNA polymerase catalyzes the transcription of DNA into RNA using the four ribonucleoside triphosphates as substrates. In Chlorobium phaeobacteroides (strain DSM 266 / SMG 266 / 2430), this protein is DNA-directed RNA polymerase subunit alpha.